The chain runs to 436 residues: Trigger factor (436 aa).

The region spanning 161–246 (EDQLNIDFVG…VNTVSEPKLP (86 aa)) is the PPIase FKBP-type domain.

Belongs to the FKBP-type PPIase family. Tig subfamily.

The protein localises to the cytoplasm. It carries out the reaction [protein]-peptidylproline (omega=180) = [protein]-peptidylproline (omega=0). In terms of biological role, involved in protein export. Acts as a chaperone by maintaining the newly synthesized protein in an open conformation. Functions as a peptidyl-prolyl cis-trans isomerase. The polypeptide is Trigger factor (Pseudomonas savastanoi pv. phaseolicola (strain 1448A / Race 6) (Pseudomonas syringae pv. phaseolicola (strain 1448A / Race 6))).